A 348-amino-acid polypeptide reads, in one-letter code: Dihydroorotase (348 aa).

Zn(2+)-binding residues include His17 and His19. Substrate contacts are provided by residues 19–21 (HLR) and Asn45. 3 residues coordinate Zn(2+): Lys103, His140, and His178. An N6-carboxylysine modification is found at Lys103. Residue His140 participates in substrate binding. Residue Leu223 coordinates substrate. Zn(2+) is bound at residue Asp251. The active site involves Asp251. 2 residues coordinate substrate: His255 and Ala267.

This sequence belongs to the metallo-dependent hydrolases superfamily. DHOase family. Class II DHOase subfamily. As to quaternary structure, homodimer. The cofactor is Zn(2+).

It catalyses the reaction (S)-dihydroorotate + H2O = N-carbamoyl-L-aspartate + H(+). The protein operates within pyrimidine metabolism; UMP biosynthesis via de novo pathway; (S)-dihydroorotate from bicarbonate: step 3/3. In terms of biological role, catalyzes the reversible cyclization of carbamoyl aspartate to dihydroorotate. The polypeptide is Dihydroorotase (Escherichia coli O17:K52:H18 (strain UMN026 / ExPEC)).